The following is a 470-amino-acid chain: Ribulose bisphosphate carboxylase large chain (470 aa).

Positions 115 and 165 each coordinate substrate. Catalysis depends on lysine 167, which acts as the Proton acceptor. Position 169 (lysine 169) interacts with substrate. Mg(2+) contacts are provided by lysine 193, aspartate 195, and glutamate 196. Lysine 193 carries the N6-carboxylysine modification. Histidine 286 acts as the Proton acceptor in catalysis. Arginine 287, histidine 319, and serine 371 together coordinate substrate.

It belongs to the RuBisCO large chain family. Type I subfamily. Heterohexadecamer of 8 large chains and 8 small chains. Mg(2+) serves as cofactor.

The protein localises to the carboxysome. The enzyme catalyses 2 (2R)-3-phosphoglycerate + 2 H(+) = D-ribulose 1,5-bisphosphate + CO2 + H2O. It catalyses the reaction D-ribulose 1,5-bisphosphate + O2 = 2-phosphoglycolate + (2R)-3-phosphoglycerate + 2 H(+). Its function is as follows. RuBisCO catalyzes two reactions: the carboxylation of D-ribulose 1,5-bisphosphate, the primary event in carbon dioxide fixation, as well as the oxidative fragmentation of the pentose substrate in the photorespiration process. Both reactions occur simultaneously and in competition at the same active site. This is Ribulose bisphosphate carboxylase large chain from Synechococcus sp. (strain CC9902).